Reading from the N-terminus, the 344-residue chain is Ferrochelatase (344 aa).

Residues histidine 214 and glutamate 295 each coordinate Fe cation.

The protein belongs to the ferrochelatase family.

The protein localises to the cytoplasm. It catalyses the reaction heme b + 2 H(+) = protoporphyrin IX + Fe(2+). It participates in porphyrin-containing compound metabolism; protoheme biosynthesis; protoheme from protoporphyrin-IX: step 1/1. Functionally, catalyzes the ferrous insertion into protoporphyrin IX. The polypeptide is Ferrochelatase (Rhizobium leguminosarum bv. trifolii (strain WSM2304)).